Reading from the N-terminus, the 378-residue chain is Probable endopolygalacturonase E (378 aa).

Residues 1–19 form the signal peptide; sequence MVTSSSVIVLTLWAALVSA. Residues 20 to 38 constitute a propeptide that is removed on maturation; the sequence is SPVADPLVTPAPKLEDLEK. Cysteine 43 and cysteine 61 are disulfide-bonded. PbH1 repeat units lie at residues 103 to 125, 174 to 204, and 205 to 226; these read GPLVSVSGTDITVTGADGAYLNG, STYLTMEDITIDNTDGDDGEAANTDGFDIGD, and STYITITGANVYNQDDCVAVNS. Residue aspartate 219 is the Proton donor of the active site. An intrachain disulfide couples cysteine 221 to cysteine 237. Histidine 241 is a catalytic residue. PbH1 repeat units follow at residues 256–277, 285–307, and 317–345; these read VKNVTFYDSEIKSSQNGVRIKT, VSEVTYKEITLSDITDYGIVVEQ, and TDGITIEDFVLDNVQGSVESSGTNIYIVC. Asparagine 258 is a glycosylation site (N-linked (GlcNAc...) asparagine). Cystine bridges form between cysteine 345–cysteine 350 and cysteine 369–cysteine 378.

This sequence belongs to the glycosyl hydrolase 28 family.

Its subcellular location is the secreted. It carries out the reaction (1,4-alpha-D-galacturonosyl)n+m + H2O = (1,4-alpha-D-galacturonosyl)n + (1,4-alpha-D-galacturonosyl)m.. Functionally, involved in maceration and soft-rotting of plant tissue. Hydrolyzes the 1,4-alpha glycosidic bonds of de-esterified pectate in the smooth region of the plant cell wall. This Aspergillus niger (strain ATCC MYA-4892 / CBS 513.88 / FGSC A1513) protein is Probable endopolygalacturonase E (pgaE).